A 346-amino-acid chain; its full sequence is D-amino-acid oxidase (346 aa).

FAD-binding residues include Gly22, Ile24, Thr52, Thr53, Ser54, Ala58, Ala59, Leu60, and Thr187. Residues Tyr227 and Arg284 each coordinate D-proline. D-serine contacts are provided by Tyr227 and Arg284. Positions 284, 311, 312, 314, and 316 each coordinate FAD. Arg284 contacts D-dopa. Residue Gly312 coordinates D-proline. D-serine is bound at residue Gly312. Gly312 serves as a coordination point for D-dopa. The Microbody targeting signal motif lies at 344-346; the sequence is SKL.

It belongs to the DAMOX/DASOX family. FAD serves as cofactor.

The protein localises to the peroxisome matrix. It carries out the reaction a D-alpha-amino acid + O2 + H2O = a 2-oxocarboxylate + H2O2 + NH4(+). It catalyses the reaction D-serine + O2 + H2O = 3-hydroxypyruvate + H2O2 + NH4(+). The enzyme catalyses D-phenylalanine + O2 + H2O = 3-phenylpyruvate + H2O2 + NH4(+). The catalysed reaction is D-alanine + O2 + H2O = pyruvate + H2O2 + NH4(+). It carries out the reaction D-arginine + O2 + H2O = 5-guanidino-2-oxopentanoate + H2O2 + NH4(+). It catalyses the reaction D-methionine + O2 + H2O = 4-methylsulfanyl-2-oxobutanoate + H2O2 + NH4(+). The enzyme catalyses D-ornithine + O2 + H2O = 5-amino-2-oxopentanoate + H2O2 + NH4(+). The catalysed reaction is D-leucine + O2 + H2O = 4-methyl-2-oxopentanoate + H2O2 + NH4(+). It carries out the reaction D-lysine + O2 + H2O = 6-amino-2-oxohexanoate + H2O2 + NH4(+). It catalyses the reaction D-proline + O2 = 1-pyrroline-2-carboxylate + H2O2. The enzyme catalyses D-valine + O2 + H2O = 3-methyl-2-oxobutanoate + H2O2 + NH4(+). The catalysed reaction is D-histidine + O2 + H2O = 3-(imidazol-5-yl)pyruvate + H2O2 + NH4(+). Its function is as follows. Catalyzes the oxidative deamination of D-amino acids with broad substrate specificity. Has low in vitro and no in vivo activity on D-serine; primary D-serine degradation is performed by the D-serine dehydratase dsd. The sequence is that of D-amino-acid oxidase (ddo-1) from Dictyostelium discoideum (Social amoeba).